A 118-amino-acid chain; its full sequence is Protein TusC (118 aa).

Belongs to the DsrF/TusC family. In terms of assembly, heterohexamer, formed by a dimer of trimers. The hexameric TusBCD complex contains 2 copies each of TusB, TusC and TusD. The TusBCD complex interacts with TusE.

The protein resides in the cytoplasm. In terms of biological role, part of a sulfur-relay system required for 2-thiolation of 5-methylaminomethyl-2-thiouridine (mnm(5)s(2)U) at tRNA wobble positions. The polypeptide is Protein TusC (Salmonella agona (strain SL483)).